The primary structure comprises 143 residues: Transcriptional regulator MraZ (143 aa).

SpoVT-AbrB domains lie at 5–47 (EYSH…PMPV) and 76–119 (AMEA…SDEN).

This sequence belongs to the MraZ family. As to quaternary structure, forms oligomers.

It is found in the cytoplasm. It localises to the nucleoid. The protein is Transcriptional regulator MraZ of Leuconostoc citreum (strain KM20).